Consider the following 581-residue polypeptide: ATP-dependent lipid A-core flippase (581 aa).

The next 5 helical transmembrane spans lie at 15 to 35 (LWPI…ALII), 62 to 82 (ISIW…SSGF), 152 to 172 (IIGL…VLII), 252 to 272 (IIIQ…SSLP), and 274 to 294 (IIDE…IALM). The 283-residue stretch at 27-309 (IISIVALIIN…LTNVNANFQK (283 aa)) folds into the ABC transmembrane type-1 domain. One can recognise an ABC transporter domain in the interval 341–577 (IKFKNITFTY…KGVYAQIYRL (237 aa)). Residue 375–382 (GSSGAGKS) participates in ATP binding.

The protein belongs to the ABC transporter superfamily. Lipid exporter (TC 3.A.1.106) family. In terms of assembly, homodimer.

The protein resides in the cell membrane. The catalysed reaction is ATP + H2O + lipid A-core oligosaccharideSide 1 = ADP + phosphate + lipid A-core oligosaccharideSide 2.. Its function is as follows. Involved in lipopolysaccharide (LPS) biosynthesis. Translocates lipid A-core from the inner to the outer leaflet of the inner membrane. Transmembrane domains (TMD) form a pore in the inner membrane and the ATP-binding domain (NBD) is responsible for energy generation. This Wigglesworthia glossinidia brevipalpis protein is ATP-dependent lipid A-core flippase.